Consider the following 67-residue polypeptide: ATP synthase F(0) complex subunit 8 (67 aa).

The chain crosses the membrane as a helical span at residues 8–24 (TWFTTILATITTLFILF). Position 54 is an N6-acetyllysine; alternate (K54). Position 54 is an N6-succinyllysine; alternate (K54). K57 is subject to N6-acetyllysine.

The protein belongs to the ATPase protein 8 family. In terms of assembly, component of the ATP synthase complex composed at least of ATP5F1A/subunit alpha, ATP5F1B/subunit beta, ATP5MC1/subunit c (homooctomer), MT-ATP6/subunit a, MT-ATP8/subunit 8, ATP5ME/subunit e, ATP5MF/subunit f, ATP5MG/subunit g, ATP5MK/subunit k, ATP5MJ/subunit j, ATP5F1C/subunit gamma, ATP5F1D/subunit delta, ATP5F1E/subunit epsilon, ATP5PF/subunit F6, ATP5PB/subunit b, ATP5PD/subunit d, ATP5PO/subunit OSCP. ATP synthase complex consists of a soluble F(1) head domain (subunits alpha(3) and beta(3)) - the catalytic core - and a membrane F(0) domain - the membrane proton channel (subunits c, a, 8, e, f, g, k and j). These two domains are linked by a central stalk (subunits gamma, delta, and epsilon) rotating inside the F1 region and a stationary peripheral stalk (subunits F6, b, d, and OSCP). Interacts with PRICKLE3.

The protein resides in the mitochondrion membrane. In terms of biological role, subunit 8, of the mitochondrial membrane ATP synthase complex (F(1)F(0) ATP synthase or Complex V) that produces ATP from ADP in the presence of a proton gradient across the membrane which is generated by electron transport complexes of the respiratory chain. ATP synthase complex consist of a soluble F(1) head domain - the catalytic core - and a membrane F(1) domain - the membrane proton channel. These two domains are linked by a central stalk rotating inside the F(1) region and a stationary peripheral stalk. During catalysis, ATP synthesis in the catalytic domain of F(1) is coupled via a rotary mechanism of the central stalk subunits to proton translocation. In vivo, can only synthesize ATP although its ATP hydrolase activity can be activated artificially in vitro. Part of the complex F(0) domain. The chain is ATP synthase F(0) complex subunit 8 from Talpa europaea (European mole).